The following is a 64-amino-acid chain: DNA gyrase inhibitor YacG (64 aa).

Zn(2+)-binding residues include C7, C10, C26, and C30. Residues S44–Y64 are disordered.

This sequence belongs to the DNA gyrase inhibitor YacG family. In terms of assembly, interacts with GyrB. Zn(2+) is required as a cofactor.

In terms of biological role, inhibits all the catalytic activities of DNA gyrase by preventing its interaction with DNA. Acts by binding directly to the C-terminal domain of GyrB, which probably disrupts DNA binding by the gyrase. In Idiomarina loihiensis (strain ATCC BAA-735 / DSM 15497 / L2-TR), this protein is DNA gyrase inhibitor YacG.